The primary structure comprises 649 residues: MQCSYPLARQLERSSALNNNLFQKAAIWLVIALVLFTVFKQFDKPRAQDSVTYSQFMDDAKNGKVSRVDVQGRNLVVSPKEGSKYTIISPGDIWMVGDLMKYGVQVTGKADDEPNVLVQALYYLGPTLLIIVFWFYMMRQMQGGGKGGAFSFGKSRARLIDENQNAVTFADVAGCDESKEEVVELVDFLKDPQKFQKLGGRIPRGVLLVGPPGTGKTLLARAIAGEAKVPFFSISGSDFVEMFVGVGAARVRDMFENAKKQAPCIVFIDEIDAVGRHRGAGMGGGNDEREQTLNQMLVEMDGFEANSGVIVIAATNRADVLDKALLRPGRFDRQVYVGLPDIRGREQILKVHMRKVPIGNDVDASIIARGTPGFSGADLANLVNEAALFAARRSKRVVDMQDFEDAKDKIYMGPERKSTVMREEERKATAYHESGHAVVAKLLPKADPVHKVTIMPRGWALGVTWQLPEHDKYSKYKDNMLEEIAILFGGRAAEEVFLNAMSTGASNDFERATKIARDMVTRFGMSDSLGAMVYVDTEQDGMFGKLSSKTVSEATQQKVDAEIRRIIDDQYALAKRLLEENRDKVEAMTNALMEWETIDAEQVNDIMAGRPPRPPRGAQGPNSGGNTPPGGSPVAPTNAPATARADETV.

Topologically, residues 1–18 (MQCSYPLARQLERSSALN) are cytoplasmic. The chain crosses the membrane as a helical span at residues 19–39 (NNLFQKAAIWLVIALVLFTVF). Over 40 to 115 (KQFDKPRAQD…VTGKADDEPN (76 aa)) the chain is Periplasmic. A helical membrane pass occupies residues 116–136 (VLVQALYYLGPTLLIIVFWFY). The Cytoplasmic segment spans residues 137–649 (MMRQMQGGGK…PATARADETV (513 aa)). 210 to 217 (GPPGTGKT) provides a ligand contact to ATP. His432 is a Zn(2+) binding site. Glu433 is an active-site residue. Residues His436 and Asp508 each contribute to the Zn(2+) site. The interval 606–649 (IMAGRPPRPPRGAQGPNSGGNTPPGGSPVAPTNAPATARADETV) is disordered. Residues 616–626 (RGAQGPNSGGN) are compositionally biased toward low complexity.

This sequence in the central section; belongs to the AAA ATPase family. It in the C-terminal section; belongs to the peptidase M41 family. In terms of assembly, homohexamer. Requires Zn(2+) as cofactor.

Its subcellular location is the cell inner membrane. Functionally, acts as a processive, ATP-dependent zinc metallopeptidase for both cytoplasmic and membrane proteins. Plays a role in the quality control of integral membrane proteins. This is ATP-dependent zinc metalloprotease FtsH from Cupriavidus metallidurans (strain ATCC 43123 / DSM 2839 / NBRC 102507 / CH34) (Ralstonia metallidurans).